A 356-amino-acid chain; its full sequence is Nuclear hormone receptor family member nhr-169 (356 aa).

Positions 16-90 (DPICSVCNFS…AGMKRSLVKE (75 aa)) form a DNA-binding region, nuclear receptor. 2 consecutive NR C4-type zinc fingers follow at residues 19–40 (CSVC…CSAC) and 56–72 (CKKD…CRAC). Residues 144–356 (DVSKILKTTP…KLYLHMGLPF (213 aa)) enclose the NR LBD domain.

The protein belongs to the nuclear hormone receptor family.

The protein localises to the nucleus. Its function is as follows. Orphan nuclear receptor. The sequence is that of Nuclear hormone receptor family member nhr-169 (nhr-169) from Caenorhabditis elegans.